A 402-amino-acid chain; its full sequence is 8-amino-7-oxononanoate synthase (402 aa).

Residue R26 participates in substrate binding. 114-115 (GY) is a binding site for pyridoxal 5'-phosphate. H139 serves as a coordination point for substrate. 3 residues coordinate pyridoxal 5'-phosphate: S182, H210, and T239. The residue at position 242 (K242) is an N6-(pyridoxal phosphate)lysine. Residue T359 participates in substrate binding.

Belongs to the class-II pyridoxal-phosphate-dependent aminotransferase family. BioF subfamily. As to quaternary structure, homodimer. It depends on pyridoxal 5'-phosphate as a cofactor.

It carries out the reaction 6-carboxyhexanoyl-[ACP] + L-alanine + H(+) = (8S)-8-amino-7-oxononanoate + holo-[ACP] + CO2. The protein operates within cofactor biosynthesis; biotin biosynthesis. Its function is as follows. Catalyzes the decarboxylative condensation of pimeloyl-[acyl-carrier protein] and L-alanine to produce 8-amino-7-oxononanoate (AON), [acyl-carrier protein], and carbon dioxide. In Halorhodospira halophila (strain DSM 244 / SL1) (Ectothiorhodospira halophila (strain DSM 244 / SL1)), this protein is 8-amino-7-oxononanoate synthase.